We begin with the raw amino-acid sequence, 430 residues long: Serine--tRNA ligase (430 aa).

T235–E237 is a binding site for L-serine. Residues R266–E268 and V282 each bind ATP. Position 289 (E289) interacts with L-serine. Residue E353–S356 coordinates ATP. Position 389 (S389) interacts with L-serine.

This sequence belongs to the class-II aminoacyl-tRNA synthetase family. Type-1 seryl-tRNA synthetase subfamily. Homodimer. The tRNA molecule binds across the dimer.

It localises to the cytoplasm. It carries out the reaction tRNA(Ser) + L-serine + ATP = L-seryl-tRNA(Ser) + AMP + diphosphate + H(+). The enzyme catalyses tRNA(Sec) + L-serine + ATP = L-seryl-tRNA(Sec) + AMP + diphosphate + H(+). The protein operates within aminoacyl-tRNA biosynthesis; selenocysteinyl-tRNA(Sec) biosynthesis; L-seryl-tRNA(Sec) from L-serine and tRNA(Sec): step 1/1. In terms of biological role, catalyzes the attachment of serine to tRNA(Ser). Is also able to aminoacylate tRNA(Sec) with serine, to form the misacylated tRNA L-seryl-tRNA(Sec), which will be further converted into selenocysteinyl-tRNA(Sec). In Chlorobium luteolum (strain DSM 273 / BCRC 81028 / 2530) (Pelodictyon luteolum), this protein is Serine--tRNA ligase.